A 364-amino-acid chain; its full sequence is Peptidyl-prolyl cis-trans isomerase D (364 aa).

One can recognise a PPIase cyclophilin-type domain in the interval 7–170 (YFDITIGNKP…EDAVIAKCGE (164 aa)). TPR repeat units lie at residues 208–241 (ATHL…LNEK), 261–294 (IPCY…DSKY), and 301–334 (TKAY…DPED).

Belongs to the cyclophilin-type PPIase family. PPIase D subfamily.

The protein resides in the cytoplasm. The enzyme catalyses [protein]-peptidylproline (omega=180) = [protein]-peptidylproline (omega=0). Functionally, PPIases accelerate the folding of proteins. It catalyzes the cis-trans isomerization of proline imidic peptide bonds in oligopeptides. This is Peptidyl-prolyl cis-trans isomerase D (cyp12) from Rhizopus delemar (strain RA 99-880 / ATCC MYA-4621 / FGSC 9543 / NRRL 43880) (Mucormycosis agent).